A 360-amino-acid polypeptide reads, in one-letter code: S-adenosylmethionine-dependent nucleotide dehydratase RSAD2 (360 aa).

Positions 44–71 (KGQPRVRGEPKETQETHEDPGSAQPTTP) are disordered. A compositionally biased stretch (basic and acidic residues) spans 49–63 (VRGEPKETQETHEDP). The Radical SAM core domain maps to 68–288 (PTTPVSVNYH…LQRHKDVSCL (221 aa)). [4Fe-4S] cluster is bound by residues cysteine 82, cysteine 86, and cysteine 89. An N6-acetyllysine modification is found at lysine 196. A Glycyl lysine isopeptide (Lys-Gly) (interchain with G-Cter in ubiquitin) cross-link involves residue lysine 205.

The protein belongs to the radical SAM superfamily. RSAD2 family. Homodimer. Interacts with IRAK1 and TRAF6. Interacts with FPPS. Interacts with HADHB. Interacts (via C-terminus) with VAPA/VAP33 (via C-terminus). It depends on [4Fe-4S] cluster as a cofactor. Post-translationally, acetylated by HAT1. HAT1-mediated acetylation of Lys-196 in turn recruits UBE4A that stimulates RSAD2 polyubiquitination leading to proteasomal degradation. In terms of processing, 'Lys-6'-linked polyubiquitination at Lys-205 leads to RSAD2 protein degradation. As to expression, in neonatal rat tibia, specifically localized in cells of the periosteum, in osteoblasts lining endosteal and peristeal bone surfaces, to articular surfaces of cartilage and in perichondral cells but not in chondrocytes (at protein level). Expressed predominantly in bone marrow and spleen.

It is found in the endoplasmic reticulum membrane. It localises to the golgi apparatus. Its subcellular location is the endoplasmic reticulum. The protein localises to the lipid droplet. The protein resides in the mitochondrion. It is found in the mitochondrion inner membrane. It localises to the mitochondrion outer membrane. The catalysed reaction is CTP + AH2 + S-adenosyl-L-methionine = 3'-deoxy-3',4'-didehydro-CTP + 5'-deoxyadenosine + L-methionine + A + H2O + H(+). Its activity is regulated as follows. IRAK1 and TRAF6 synergistically activate RSAD2 increasing its activity with CTP as substrate about 10-fold. Its function is as follows. Interferon-inducible antiviral protein which plays a major role in the cell antiviral state induced by type I and type II interferon. Catalyzes the conversion of cytidine triphosphate (CTP) to 3'-deoxy-3',4'-didehydro-CTP (ddhCTP) via a SAM-dependent radical mechanism. In turn, ddhCTP acts as a chain terminator for the RNA-dependent RNA polymerases from multiple viruses and directly inhibits viral replication. Therefore, inhibits a wide range of DNA and RNA viruses. Also promotes TLR7 and TLR9-dependent production of IFN-beta production in plasmacytoid dendritic cells (pDCs) by facilitating 'Lys-63'-linked ubiquitination of IRAK1 by TRAF6. Plays a role in CD4+ T-cells activation and differentiation. Facilitates T-cell receptor (TCR)-mediated GATA3 activation and optimal T-helper 2 (Th2) cytokine production by modulating NFKB1 and JUNB activities. Can inhibit secretion of soluble proteins. The sequence is that of S-adenosylmethionine-dependent nucleotide dehydratase RSAD2 from Rattus norvegicus (Rat).